We begin with the raw amino-acid sequence, 181 residues long: Large ribosomal subunit protein uL5 (181 aa).

Belongs to the universal ribosomal protein uL5 family. Part of the 50S ribosomal subunit; contacts the 5S rRNA and probably tRNA. Forms a bridge to the 30S subunit in the 70S ribosome.

Its function is as follows. This is one of the proteins that bind and probably mediate the attachment of the 5S RNA into the large ribosomal subunit, where it forms part of the central protuberance. In the 70S ribosome it contacts protein S13 of the 30S subunit (bridge B1b), connecting the 2 subunits; this bridge is implicated in subunit movement. May contact the P site tRNA; the 5S rRNA and some of its associated proteins might help stabilize positioning of ribosome-bound tRNAs. This chain is Large ribosomal subunit protein uL5, found in Methanococcus maripaludis (strain DSM 14266 / JCM 13030 / NBRC 101832 / S2 / LL).